A 638-amino-acid polypeptide reads, in one-letter code: DNA-directed RNA polymerase I subunit RPA1 (638 aa).

The span at 297-317 (EYDEEDDESSGESEVREGDEE) shows a compositional bias: acidic residues. The segment at 297–321 (EYDEEDDESSGESEVREGDEEQEKK) is disordered.

This sequence belongs to the RNA polymerase beta' chain family. As to quaternary structure, each class of RNA polymerase is assembled from 9 to 14 different polypeptides. This subunit is the largest component of RNA polymerase I.

Its subcellular location is the nucleus. It catalyses the reaction RNA(n) + a ribonucleoside 5'-triphosphate = RNA(n+1) + diphosphate. In terms of biological role, DNA-dependent RNA polymerase catalyzes the transcription of DNA into RNA using the four ribonucleoside triphosphates as substrates. RNA polymerase I is essentially used to transcribe ribosomal DNA units. The protein is DNA-directed RNA polymerase I subunit RPA1 (RPA1) of Euplotoides octocarinatus (Freshwater ciliate).